A 148-amino-acid polypeptide reads, in one-letter code: Truncated transcription factor CAULIFLOWER C (148 aa).

An MADS-box domain is found at 1 to 61 (MGRGRVEMKR…GKLFEYSSES (61 aa)). In terms of domain architecture, K-box; partial spans 90-148 (QTNWSMEYSRLKAKIELWERNQRHYLGEDLESISIKELQNLEQQLDTSLKHIPSRKVCK).

In terms of assembly, homodimer capable of binding to CArG-box sequences.

The protein resides in the nucleus. Probable transcription factor that promotes early floral meristem identity in synergy with APETALA1, FRUITFULL and LEAFY. Is required subsequently for the transition of an inflorescence meristem into a floral meristem. Seems to be partially redundant to the function of APETALA1. This Brassica oleracea var. botrytis (Cauliflower) protein is Truncated transcription factor CAULIFLOWER C (CAL-C).